Here is a 392-residue protein sequence, read N- to C-terminus: GTPase Obg (392 aa).

Residues 1–159 (MKFVDEAEIR…RNLKLELMLL (159 aa)) enclose the Obg domain. The segment at 121–146 (GFHGLGNTRFKSSTNRAPRQKTNGTP) is disordered. Positions 129-145 (RFKSSTNRAPRQKTNGT) are enriched in polar residues. Residues 160-333 (ADVGLLGMPN…LCNDVMDFIE (174 aa)) form the OBG-type G domain. GTP-binding positions include 166–173 (GMPNAGKS), 191–195 (FTTLV), 213–216 (DIPG), 283–286 (NKVD), and 314–316 (SAF). Mg(2+) is bound by residues Ser-173 and Thr-193.

It belongs to the TRAFAC class OBG-HflX-like GTPase superfamily. OBG GTPase family. In terms of assembly, monomer. Mg(2+) is required as a cofactor.

Its subcellular location is the cytoplasm. Functionally, an essential GTPase which binds GTP, GDP and possibly (p)ppGpp with moderate affinity, with high nucleotide exchange rates and a fairly low GTP hydrolysis rate. Plays a role in control of the cell cycle, stress response, ribosome biogenesis and in those bacteria that undergo differentiation, in morphogenesis control. The sequence is that of GTPase Obg from Alteromonas mediterranea (strain DSM 17117 / CIP 110805 / LMG 28347 / Deep ecotype).